Reading from the N-terminus, the 115-residue chain is 5-hydroxyisourate hydrolase (115 aa).

The tract at residues Met1–Arg23 is disordered. Substrate-binding residues include His7, Arg45, and Tyr112.

It belongs to the transthyretin family. 5-hydroxyisourate hydrolase subfamily. Homotetramer.

The enzyme catalyses 5-hydroxyisourate + H2O = 5-hydroxy-2-oxo-4-ureido-2,5-dihydro-1H-imidazole-5-carboxylate + H(+). Functionally, catalyzes the hydrolysis of 5-hydroxyisourate (HIU) to 2-oxo-4-hydroxy-4-carboxy-5-ureidoimidazoline (OHCU). The polypeptide is 5-hydroxyisourate hydrolase (Caulobacter vibrioides (strain ATCC 19089 / CIP 103742 / CB 15) (Caulobacter crescentus)).